We begin with the raw amino-acid sequence, 308 residues long: Ribosomal RNA small subunit methyltransferase A (308 aa).

S-adenosyl-L-methionine-binding residues include Asn35, Val37, Gly62, Glu83, Asp113, and Asn136.

The protein belongs to the class I-like SAM-binding methyltransferase superfamily. rRNA adenine N(6)-methyltransferase family. RsmA subfamily.

Its subcellular location is the cytoplasm. The catalysed reaction is adenosine(1518)/adenosine(1519) in 16S rRNA + 4 S-adenosyl-L-methionine = N(6)-dimethyladenosine(1518)/N(6)-dimethyladenosine(1519) in 16S rRNA + 4 S-adenosyl-L-homocysteine + 4 H(+). In terms of biological role, specifically dimethylates two adjacent adenosines (A1518 and A1519) in the loop of a conserved hairpin near the 3'-end of 16S rRNA in the 30S particle. May play a critical role in biogenesis of 30S subunits. The sequence is that of Ribosomal RNA small subunit methyltransferase A from Bifidobacterium longum (strain NCC 2705).